A 379-amino-acid chain; its full sequence is Reducing end xylose-releasing exo-oligoxylanase (379 aa).

The Proton donor role is filled by E66. D259 functions as the Proton acceptor in the catalytic mechanism.

The protein belongs to the glycosyl hydrolase 8 (cellulase D) family.

It catalyses the reaction Hydrolysis of (1-&gt;4)-beta-D-xylose residues from the reducing end of oligosaccharides.. Its function is as follows. Hydrolyzes xylooligosaccharides with a degree of polymerization of greater than or equal to 3, releasing xylose from the reducing end. Has low activity on birchwood xylan, oat spelt xylan and arabinoxylan. In Bifidobacterium adolescentis (strain ATCC 15703 / DSM 20083 / NCTC 11814 / E194a), this protein is Reducing end xylose-releasing exo-oligoxylanase.